The chain runs to 214 residues: Endothelin-3 (214 aa).

An N-terminal signal peptide occupies residues 1 to 16 (MEPGLWLLLGLTVTSA). The propeptide occupies 17-94 (AGLVPCPQSG…DKGLPAHHRP (78 aa)). The disordered stretch occupies residues 24–91 (QSGDSGRASV…KQEDKGLPAH (68 aa)). Positions 25–35 (SGDSGRASVSQ) are enriched in polar residues. Disulfide bonds link Cys-97-Cys-111 and Cys-99-Cys-107. A propeptide spanning residues 118–214 (INTPEQTVPY…MSRTDKAHRP (97 aa)) is cleaved from the precursor. Positions 159 to 173 (CTCMGADDKACAHFC) are endothelin-like. Residues 183–214 (SGRAERPAAEEMRETGGPRQRLMSRTDKAHRP) are disordered. Over residues 185 to 198 (RAERPAAEEMRETG) the composition is skewed to basic and acidic residues.

Belongs to the endothelin/sarafotoxin family.

It is found in the secreted. Functionally, endothelins are endothelium-derived vasoconstrictor peptides. This is Endothelin-3 (Edn3) from Mus musculus (Mouse).